Consider the following 122-residue polypeptide: Serum amyloid A-2 protein (122 aa).

The first 19 residues, 1–19 (MKLLTSLVFCSLLLGVCHG), serve as a signal peptide directing secretion. The segment covering 89 to 108 (RGHEDTMADQEANRHGRSGK) has biased composition (basic and acidic residues). Residues 89-122 (RGHEDTMADQEANRHGRSGKDPNYYRPPGLPAKY) form a disordered region.

The protein belongs to the SAA family. In terms of assembly, apolipoprotein of the HDL complex. Expressed by the liver; secreted in plasma.

It localises to the secreted. Major acute phase reactant. The sequence is that of Serum amyloid A-2 protein from Mus musculus (Mouse).